The chain runs to 116 residues: uncharacterized protein (116 aa).

This is an uncharacterized protein from Schizosaccharomyces pombe (strain 972 / ATCC 24843) (Fission yeast).